Reading from the N-terminus, the 600-residue chain is tRNA uridine 5-carboxymethylaminomethyl modification enzyme MnmG (600 aa).

Residue 10–15 participates in FAD binding; the sequence is GGGHAG. The disordered stretch occupies residues 216 to 239; sequence ADPQPRGFTGTPGPRAAESPTWQT. 267-281 provides a ligand contact to NAD(+); it reads GPRYCPSIEDKVVKF.

The protein belongs to the MnmG family. In terms of assembly, homodimer. Heterotetramer of two MnmE and two MnmG subunits. FAD serves as cofactor.

The protein resides in the cytoplasm. In terms of biological role, NAD-binding protein involved in the addition of a carboxymethylaminomethyl (cmnm) group at the wobble position (U34) of certain tRNAs, forming tRNA-cmnm(5)s(2)U34. The sequence is that of tRNA uridine 5-carboxymethylaminomethyl modification enzyme MnmG from Deinococcus radiodurans (strain ATCC 13939 / DSM 20539 / JCM 16871 / CCUG 27074 / LMG 4051 / NBRC 15346 / NCIMB 9279 / VKM B-1422 / R1).